Consider the following 220-residue polypeptide: Cytidylate kinase (220 aa).

10–18 (GPASSGKST) contacts ATP.

It belongs to the cytidylate kinase family. Type 1 subfamily.

The protein localises to the cytoplasm. It catalyses the reaction CMP + ATP = CDP + ADP. The catalysed reaction is dCMP + ATP = dCDP + ADP. This chain is Cytidylate kinase, found in Lactococcus lactis subsp. lactis (strain IL1403) (Streptococcus lactis).